The following is a 613-amino-acid chain: Dihydroxy-acid dehydratase 3 (613 aa).

Residue Asp-81 coordinates Mg(2+). Residue Cys-122 participates in [2Fe-2S] cluster binding. Mg(2+)-binding residues include Asp-123 and Lys-124. The residue at position 124 (Lys-124) is an N6-carboxylysine. Cys-197 contributes to the [2Fe-2S] cluster binding site. Residue Glu-493 coordinates Mg(2+). The active-site Proton acceptor is the Ser-519.

This sequence belongs to the IlvD/Edd family. In terms of assembly, homodimer. It depends on [2Fe-2S] cluster as a cofactor. Mg(2+) serves as cofactor.

The enzyme catalyses (2R)-2,3-dihydroxy-3-methylbutanoate = 3-methyl-2-oxobutanoate + H2O. It catalyses the reaction (2R,3R)-2,3-dihydroxy-3-methylpentanoate = (S)-3-methyl-2-oxopentanoate + H2O. Its pathway is amino-acid biosynthesis; L-isoleucine biosynthesis; L-isoleucine from 2-oxobutanoate: step 3/4. It participates in amino-acid biosynthesis; L-valine biosynthesis; L-valine from pyruvate: step 3/4. Functionally, functions in the biosynthesis of branched-chain amino acids. Catalyzes the dehydration of (2R,3R)-2,3-dihydroxy-3-methylpentanoate (2,3-dihydroxy-3-methylvalerate) into 2-oxo-3-methylpentanoate (2-oxo-3-methylvalerate) and of (2R)-2,3-dihydroxy-3-methylbutanoate (2,3-dihydroxyisovalerate) into 2-oxo-3-methylbutanoate (2-oxoisovalerate), the penultimate precursor to L-isoleucine and L-valine, respectively. The chain is Dihydroxy-acid dehydratase 3 from Nocardia farcinica (strain IFM 10152).